Here is a 506-residue protein sequence, read N- to C-terminus: GMP synthase [glutamine-hydrolyzing] (506 aa).

Residues 2–190 form the Glutamine amidotransferase type-1 domain; the sequence is SIVILDFGSQ…FLDICGVTRD (189 aa). Residue Cys-79 is the Nucleophile of the active site. Active-site residues include His-165 and Glu-167. In terms of domain architecture, GMPS ATP-PPase spans 191–381; that stretch reads WNAEHIVDEL…LGLPDHIRMR (191 aa). 219 to 225 is a binding site for ATP; sequence SGGVDSS.

In terms of assembly, homodimer.

The catalysed reaction is XMP + L-glutamine + ATP + H2O = GMP + L-glutamate + AMP + diphosphate + 2 H(+). It participates in purine metabolism; GMP biosynthesis; GMP from XMP (L-Gln route): step 1/1. Functionally, catalyzes the synthesis of GMP from XMP. The protein is GMP synthase [glutamine-hydrolyzing] (guaA) of Deinococcus radiodurans (strain ATCC 13939 / DSM 20539 / JCM 16871 / CCUG 27074 / LMG 4051 / NBRC 15346 / NCIMB 9279 / VKM B-1422 / R1).